The primary structure comprises 338 residues: Mugineic-acid 3-dioxygenase (338 aa).

The region spanning 180–283 (DISGGRVVVD…RLSVASFIVP (104 aa)) is the Fe2OG dioxygenase domain. The Fe cation site is built by histidine 208, aspartate 210, and histidine 264. Arginine 274 provides a ligand contact to 2-oxoglutarate.

The protein belongs to the iron/ascorbate-dependent oxidoreductase family. It depends on Fe(2+) as a cofactor. The cofactor is L-ascorbate. In terms of tissue distribution, expressed in roots, but not in leaves.

The catalysed reaction is mugineate + 2-oxoglutarate + O2 = 3-epihydroxymugineate + succinate + CO2 + H(+). It carries out the reaction 2'-deoxymugineate + 2-oxoglutarate + O2 = 3-epihydroxy-2'-deoxymugineate + succinate + CO2 + H(+). Its function is as follows. Involved in the biosynthesis of mugineic acid family of phytosiderophores. Hydroxylates the C-3 positions of mugineic acid (MA) and 2'-deoxymugineic acid (DMA). May be involved in boron tolerance. In Hordeum vulgare (Barley), this protein is Mugineic-acid 3-dioxygenase (IDS2).